The chain runs to 66 residues: Nigrocin-2ISa (66 aa).

Residues 1–22 form the signal peptide; the sequence is MFTLKKSMLLLFFLGTINLSLC. Residues 23–43 constitute a propeptide, removed in mature form; that stretch reads QEERDAEEERRDEDNAKMEEI. The cysteines at positions 60 and 66 are disulfide-linked.

In terms of tissue distribution, expressed by the skin glands.

The protein resides in the secreted. In terms of biological role, has antimicrobial activity against Gram-negative bacterium E.coli ATCC 8739 (MIC=25 ug), against Gram positive bacteria S.aureus ATCC 6538 (MIC=3.1 ug), methicillin-resistant S.aureus ATCC 43300 (MIC=12.5 ug), B.subtilis ATCC 6633 (MIC=12.5 ug) and against fungus C.albicans ATCC 90028 (MIC=50 ug). The chain is Nigrocin-2ISa from Odorrana ishikawae (Ishikawa's frog).